We begin with the raw amino-acid sequence, 970 residues long: Serine/threonine-protein kinase PLK4 (970 aa).

Residues 12–265 (FKVGNLLGKG…LSSVLDHPFM (254 aa)) form the Protein kinase domain. ATP contacts are provided by residues 18 to 26 (LGKGSFAGV) and K41. N6-acetyllysine is present on residues K45 and K46. D136 functions as the Proton acceptor in the catalytic mechanism. The disordered stretch occupies residues 324–373 (VFPKNKSSSDFSSSGDGNSFYTQWGNQETSNSGRGRVIQDAEERPHSRYL). The span at 327 to 343 (KNKSSSDFSSSGDGNSF) shows a compositional bias: low complexity. Over residues 344 to 356 (YTQWGNQETSNSG) the composition is skewed to polar residues. Over residues 360 to 369 (VIQDAEERPH) the composition is skewed to basic and acidic residues. The residue at position 401 (S401) is a Phosphoserine. The disordered stretch occupies residues 498 to 540 (ISPTRDFQGHPDLQKDTSKNAWTDTKVKKNSDASDNAHSVKQP). Residues 504–515 (FQGHPDLQKDTS) show a composition bias toward basic and acidic residues. The segment covering 530–540 (ASDNAHSVKQP) has biased composition (polar residues). The 114-residue stretch at 586-699 (TLRSITSPLV…SRFVQLVRSK (114 aa)) folds into the Cryptic POLO box 1 (CPB1) domain. At S665 the chain carries Phosphoserine. A Cryptic POLO box 2 (CPB2) domain is found at 700–813 (SPKITYFTRY…GRKPGSTSSP (114 aa)). Residues 808–829 (GSTSSPKALSPPPSVDSNYPTR) form a disordered region. A Phosphoserine modification is found at S817. The POLO box domain occupies 886–964 (QLLKSVFVKN…LSSILLMFSN (79 aa)).

It belongs to the protein kinase superfamily. Ser/Thr protein kinase family. CDC5/Polo subfamily. In terms of assembly, homodimer. Interacts with CEP152 (via N-terminus). Interacts with CEP78; this interaction may be important for proper PLK4 localization to the centriole and PLK4-induced overduplication of centrioles. Interacts with CEP131. Interacts simultaneously with TENT5C and CEP192. Interacts with TENT5C; this interaction leads to the TENT5C recruitment in the centrosome. Interacts with CEP85; this interaction may be important in cell migration and centriole assembly. In terms of processing, ubiquitinated; leading to its degradation by the proteasome. Deubiquitinated by USP54; leading to PLK4 stabilization. Tyrosine-phosphorylated by TEC. Post-translationally, acetylation by KAT2A and KAT2B impairs kinase activity by shifting the kinase to an inactive conformation.

Its subcellular location is the cytoplasm. It localises to the cytoskeleton. The protein localises to the microtubule organizing center. The protein resides in the centrosome. It is found in the centriole. Its subcellular location is the nucleus. It localises to the nucleolus. The protein localises to the cleavage furrow. The enzyme catalyses L-seryl-[protein] + ATP = O-phospho-L-seryl-[protein] + ADP + H(+). It carries out the reaction L-threonyl-[protein] + ATP = O-phospho-L-threonyl-[protein] + ADP + H(+). In terms of biological role, serine/threonine-protein kinase that plays a central role in centriole duplication. Able to trigger procentriole formation on the surface of the parental centriole cylinder, leading to the recruitment of centriole biogenesis proteins such as SASS6, CPAP, CCP110, CEP135 and gamma-tubulin. When overexpressed, it is able to induce centrosome amplification through the simultaneous generation of multiple procentrioles adjoining each parental centriole during S phase. Phosphorylates 'Ser-151' of FBXW5 during the G1/S transition, leading to inhibit FBXW5 ability to ubiquitinate SASS6. Its central role in centriole replication suggests a possible role in tumorigenesis, centrosome aberrations being frequently observed in tumors. Also involved in deuterosome-mediated centriole amplification in multiciliated that can generate more than 100 centrioles. Also involved in trophoblast differentiation by phosphorylating HAND1, leading to disrupt the interaction between HAND1 and MDFIC and activate HAND1. Phosphorylates CDC25C and CHEK2. Required for the recruitment of STIL to the centriole and for STIL-mediated centriole amplification. Phosphorylates CEP131 and PCM1 which is essential for proper organization and integrity of centriolar satellites. This Pongo abelii (Sumatran orangutan) protein is Serine/threonine-protein kinase PLK4.